Reading from the N-terminus, the 651-residue chain is Kinesin-like protein KIF22-A (651 aa).

In terms of domain architecture, Kinesin motor spans 31-359; the sequence is RVRVAVRLRP…LNFAAKSKQI (329 aa). Residue 116–123 participates in ATP binding; sequence GPTGAGKT. Positions 366 to 413 are disordered; sequence QETTQTVVQPAMKRPREETGHIAGSQKRKKSKNDSTESSPNSSMDTAG. Residues 401–410 are compositionally biased toward polar residues; that stretch reads TESSPNSSMD. A coiled-coil region spans residues 452 to 498; that stretch reads KRERMALLKKWEESQMEIERLKEKQKELEQKAMEAEARLEKSNNSDL. An Important for regulated proteolytic degradation motif is present at residues 561–564; the sequence is GLEN.

This sequence belongs to the TRAFAC class myosin-kinesin ATPase superfamily. Kinesin family. Ubiquitinated, leading to its subsequent proteasomal degradation.

The protein resides in the nucleus. The protein localises to the cytoplasm. Its subcellular location is the cytoskeleton. Functionally, kinesin family member that is involved in spindle formation and the movements of chromosomes during mitosis and meiosis. Binds to microtubules and to DNA. This Xenopus laevis (African clawed frog) protein is Kinesin-like protein KIF22-A (kif22-a).